Reading from the N-terminus, the 280-residue chain is Nitrogenase iron protein (280 aa).

8-15 provides a ligand contact to ATP; it reads GKGGIGKS. A [4Fe-4S] cluster-binding site is contributed by Cys-95. At Arg-98 the chain carries ADP-ribosylarginine; by dinitrogenase reductase ADP-ribosyltransferase. Cys-128 serves as a coordination point for [4Fe-4S] cluster.

It belongs to the NifH/BchL/ChlL family. In terms of assembly, homodimer. It depends on [4Fe-4S] cluster as a cofactor. In terms of processing, the reversible ADP-ribosylation of Arg-98 inactivates the nitrogenase reductase and regulates nitrogenase activity.

It carries out the reaction N2 + 8 reduced [2Fe-2S]-[ferredoxin] + 16 ATP + 16 H2O = H2 + 8 oxidized [2Fe-2S]-[ferredoxin] + 2 NH4(+) + 16 ADP + 16 phosphate + 6 H(+). Its function is as follows. The key enzymatic reactions in nitrogen fixation are catalyzed by the nitrogenase complex, which has 2 components: the iron protein and the molybdenum-iron protein. In Methanospirillum hungatei JF-1 (strain ATCC 27890 / DSM 864 / NBRC 100397 / JF-1), this protein is Nitrogenase iron protein.